The sequence spans 548 residues: Chaperonin GroEL (548 aa).

ATP is bound by residues 29 to 32, Lys50, 86 to 90, Gly414, 478 to 480, and Asp494; these read TMGP, DGTTT, and NAA.

It belongs to the chaperonin (HSP60) family. In terms of assembly, forms a cylinder of 14 subunits composed of two heptameric rings stacked back-to-back. Interacts with the co-chaperonin GroES.

It localises to the cytoplasm. It carries out the reaction ATP + H2O + a folded polypeptide = ADP + phosphate + an unfolded polypeptide.. Functionally, together with its co-chaperonin GroES, plays an essential role in assisting protein folding. The GroEL-GroES system forms a nano-cage that allows encapsulation of the non-native substrate proteins and provides a physical environment optimized to promote and accelerate protein folding. May play a protective role against the defense mechanisms generated by the infected macrophages. This is Chaperonin GroEL from Legionella pneumophila subsp. pneumophila (strain Philadelphia 1 / ATCC 33152 / DSM 7513).